The sequence spans 328 residues: Probable G-protein coupled receptor 82 (328 aa).

Topologically, residues M1–S11 are extracellular. Residues N3 and N4 are each glycosylated (N-linked (GlcNAc...) asparagine). The helical transmembrane segment at V12–G32 threads the bilayer. The Cytoplasmic portion of the chain corresponds to N33–A55. Residues N56–L76 traverse the membrane as a helical segment. The Extracellular segment spans residues R77–N92. The helical transmembrane segment at F93–I115 threads the bilayer. The Cytoplasmic portion of the chain corresponds to S116–C156. Residues I157–V177 traverse the membrane as a helical segment. The Extracellular segment spans residues E178 to R197. Residues P198–V218 form a helical membrane-spanning segment. The Cytoplasmic segment spans residues T219 to L251. A helical membrane pass occupies residues L252–F272. The Extracellular portion of the chain corresponds to Y273–S328.

Belongs to the G-protein coupled receptor 1 family.

It is found in the cell membrane. In terms of biological role, orphan receptor. This chain is Probable G-protein coupled receptor 82 (Gpr82), found in Mus musculus (Mouse).